Consider the following 1984-residue polypeptide: Sodium channel protein type 9 subunit alpha (1984 aa).

At 1–125 the chain is on the cytoplasmic side; the sequence is MAMLPPPGPQ…RRISIKILVH (125 aa). The segment covering 26-39 has biased composition (basic and acidic residues); the sequence is RISEEKAKEHKDEK. The tract at residues 26 to 55 is disordered; it reads RISEEKAKEHKDEKKDDEEEGPKPSSDLEA. Residues 112 to 410 form an I repeat; that stretch reads FSPLRRISIK…VAMAYEEQNQ (299 aa). The chain crosses the membrane as a helical span at residues 126 to 145; that stretch reads SLFSMLIMCTILTNCIFMTL. Topologically, residues 146–150 are extracellular; sequence SNPPE. The helical transmembrane segment at 151 to 172 threads the bilayer; it reads WTKNVEYTFTGIYTFESLIKIL. Residues 173–185 are Cytoplasmic-facing; sequence ARGFCVGEFTFLR. The helical transmembrane segment at 186–204 threads the bilayer; sequence DPWNWLDFVVIVFAYLTEF. At 205–210 the chain is on the extracellular side; sequence VNLGNV. N-linked (GlcNAc...) asparagine glycosylation occurs at N209. Residues 211–227 form a helical membrane-spanning segment; it reads SALRTFRVLRALKTISV. The Cytoplasmic portion of the chain corresponds to 228-241; it reads IPGLKTIVGALIQS. A helical membrane pass occupies residues 242 to 267; that stretch reads VKKLSDVMILTVFCLSVFALIGLQLF. At 268 to 346 the chain is on the extracellular side; it reads MGNLKHKCFR…PDYGYTSFDT (79 aa). C275 and C324 are disulfide-bonded. N-linked (GlcNAc...) asparagine glycosylation is present at N283. The segment at residues 347 to 363 is an intramembrane region (pore-forming); the sequence is FSWAFLALFRLMTQDYW. The Extracellular segment spans residues 364 to 376; it reads ENLYQQTLRAAGK. Residues 377–402 form a helical membrane-spanning segment; the sequence is TYMIFFVVVIFLGSFYLINLILAVVA. Residues 403–744 lie on the Cytoplasmic side of the membrane; the sequence is MAYEEQNQAN…LIYFIVMDPF (342 aa). Positions 461-471 are enriched in low complexity; it reads SSSETSRLSSK. Disordered stretches follow at residues 461–542 and 576–609; these read SSSE…RGSL and IFGDNESRRGSLFVPHRPRERRSSNISQASRSPP. Over residues 474 to 486 the composition is skewed to basic residues; it reads KERRNRRKKKKQK. Basic and acidic residues predominate over residues 489–509; the sequence is SGEEKGDDEKLSKSGSEESIR. Residues 725 to 988 form an II repeat; it reads CSPYWIKFKK…EEDTDANNLQ (264 aa). A helical membrane pass occupies residues 745-761; that stretch reads VDLAITICIVLNTLFMA. Over 762–770 the chain is Extracellular; that stretch reads MEHHPMTEE. A helical transmembrane segment spans residues 771-795; that stretch reads FKNVLAVGNLIFTGIFAAEMVLKLI. Over 796–804 the chain is Cytoplasmic; it reads AMDPYEYFQ. Residues 805–821 traverse the membrane as a helical segment; the sequence is VGWNIFDSLIVTLSLIE. The Extracellular portion of the chain corresponds to 822–830; it reads LFLADVEGL. The chain crosses the membrane as a helical span at residues 831–847; it reads SVLRSFRLLRVFKLAKS. The Cytoplasmic portion of the chain corresponds to 848–864; sequence WPTLNMLIKIIGNSVGA. A helical membrane pass occupies residues 865–887; that stretch reads LGNLTLVLAIIVFIFAVVGMQLF. The Extracellular portion of the chain corresponds to 888–914; the sequence is GKSYKECVCKINVDCKLPRWHMNDFFH. A disulfide bridge links C896 with C902. Residues 915 to 927 constitute an intramembrane region (pore-forming); it reads SFLIVFRVLCGEW. Topologically, residues 928–939 are extracellular; it reads IETMWDCMEVAG. C934 and C943 are oxidised to a cystine. The helical transmembrane segment at 940 to 966 threads the bilayer; sequence QTMCLIVYMMVMVIGNLVVLNLFLALL. The Cytoplasmic segment spans residues 967-1185; the sequence is LSSFSSDNLT…WWTIRKTCYR (219 aa). Disordered stretches follow at residues 1015-1040 and 1103-1145; these read KKPKGSKDTKRTADPNNKKENYISNR and EELS…EPVN. The segment covering 1019 to 1035 has biased composition (basic and acidic residues); that stretch reads GSKDTKRTADPNNKKEN. A compositionally biased stretch (acidic residues) spans 1135–1145; sequence GEEEAEAEPVN. Residues 1178 to 1486 form an III repeat; that stretch reads TIRKTCYRIV…KKYYNAMKKL (309 aa). The helical transmembrane segment at 1186–1210 threads the bilayer; that stretch reads IVEHSWFESFIVLMILLSSGALAFE. The Extracellular segment spans residues 1211–1222; sequence DIYIEKKKTIKI. Residues 1223–1248 traverse the membrane as a helical segment; the sequence is ILEYADKIFTYIFILEMLLKWVAYGY. Over 1249 to 1250 the chain is Cytoplasmic; that stretch reads KT. A helical membrane pass occupies residues 1251–1276; it reads YFTNAWCWLDFLIVDVSLVTLVANTL. Residues 1277 to 1285 lie on the Extracellular side of the membrane; sequence GYSDLGPIK. Residues 1286-1302 traverse the membrane as a helical segment; sequence SLRTLRALRPLRALSRF. Over 1303 to 1315 the chain is Cytoplasmic; the sequence is EGMRVVVNALIGA. A helical membrane pass occupies residues 1316–1340; it reads IPSIMNVLLVCLIFWLIFSIMGVNL. The Extracellular portion of the chain corresponds to 1341–1392; it reads FAGKFYECVNTTDGSRFPTSQVANRSECFALMNVSGNVRWKNLKVNFDNVGL. Residues C1348 and C1368 are joined by a disulfide bond. Residues N1350, N1364, and N1373 are each glycosylated (N-linked (GlcNAc...) asparagine). The segment at residues 1393-1403 is an intramembrane region (pore-forming); that stretch reads GYLSLLQVATF. Residues 1404–1429 lie on the Extracellular side of the membrane; that stretch reads KGWMDIMYAAVDSVNVNEQPKYEYSL. Residues 1430–1455 traverse the membrane as a helical segment; sequence YMYIYFVIFIIFGSFFTLNLFIGVII. The Cytoplasmic segment spans residues 1456–1512; the sequence is DNFNQQKKKLGGQDIFMTEEQKKYYNAMKKLGSKKPQKPIPRPGNKFQGCIFDLVTN. S1488 is subject to Phosphoserine; by PKC. One copy of the IV repeat lies at 1495 to 1793; that stretch reads IPRPGNKFQG…WEKFDPDATQ (299 aa). The chain crosses the membrane as a helical span at residues 1513–1532; that stretch reads QAFDITIMVLICLNMVTMMV. Over 1533 to 1543 the chain is Extracellular; that stretch reads EKEGQTEYMDY. Residues 1544–1565 form a helical membrane-spanning segment; the sequence is VLHWINMVFIILFTGECVLKLI. Residues 1566–1574 lie on the Cytoplasmic side of the membrane; sequence SLRHYYFTV. Residues 1575 to 1596 form a helical membrane-spanning segment; the sequence is GWNIFDFVVVILSIVGMFLAEM. Topologically, residues 1597–1605 are extracellular; that stretch reads IEKYFVSPT. A helical membrane pass occupies residues 1606 to 1625; the sequence is LFRVIRLARIGRILRLIKGA. At 1626 to 1638 the chain is on the cytoplasmic side; that stretch reads KGIRTLLFALMMS. A helical transmembrane segment spans residues 1639-1661; it reads LPALFNIGLLLFLVMFIYAIFGM. The Extracellular segment spans residues 1662 to 1684; it reads SNFAYVKKEAGINDMFNFETFGN. The pore-forming intramembrane region spans 1685 to 1697; the sequence is SMICLFQITTSAG. The Extracellular segment spans residues 1698–1731; sequence WDGLLAPILNSAPPDCDPKKVHPGSSVEGDCGNP. A disulfide bridge links C1713 with C1728. Residues 1732-1757 form a helical membrane-spanning segment; the sequence is SVGIFYFVSYIIISFLVVVNMYIAVI. Residues 1758–1984 are Cytoplasmic-facing; it reads LENFSVATEE…EDKEKDESRK (227 aa). Positions 1887 to 1916 constitute an IQ domain; sequence EEVSATIIQRAYRRYRLRQHVKNISSIYIK. The span at 1916–1930 shows a compositional bias: basic and acidic residues; it reads KDGDRDDDLPNKEDT. Positions 1916–1984 are disordered; it reads KDGDRDDDLP…EDKEKDESRK (69 aa). Polar residues predominate over residues 1946-1958; it reads VTASTISPPSYDS. The segment covering 1960 to 1984 has biased composition (basic and acidic residues); that stretch reads TKPDQEKYETDKTEKEDKEKDESRK.

It belongs to the sodium channel (TC 1.A.1.10) family. Nav1.7/SCN9A subfamily. As to quaternary structure, the Nav1.7 voltage-gated sodium channel consists of an ion-conducting alpha subunit SCN9A which is functional on its own regulated by one or more beta-1 (SCN1B), beta-2 (SCN2B), beta-3 (SCN3B) and beta-4 (SCN4B) subunits. SCN1B and SCN3B are non-covalently associated with SCN9A. SCN2B and SCN4B are disulfide-linked to SCN9A. SCN1B regulates channel inactivation. Interacts with NEDD4 and NEDD4L; regulates Nav1.7 activity most probably through ubiquitination and subsequent endocytosis. Interacts with TMEM233; modulates the gating properties of NaV1.7. Post-translationally, phosphorylation at Ser-1488 by PKC in a highly conserved cytoplasmic loop increases peak sodium currents. Ubiquitinated by NEDD4L; which may promote its endocytosis. Does not seem to be ubiquitinated by NEDD4. In terms of processing, ubiquitinated by NEDD4L; which may promote its endocytosis. As to expression, expressed at high level in the dorsal root ganglion and at much lower levels in the brain, sciatic nerve, nodose ganglia, heart, thyroid and adrenal glands and Schwann cells, but not in the cardiac and skeletal muscles, brain and liver.

Its subcellular location is the cell membrane. It localises to the cell projection. The protein resides in the neuron projection. The protein localises to the axon. It catalyses the reaction Na(+)(in) = Na(+)(out). Its activity is regulated as follows. Inhibited by the conotoxin GVIIJ. Pore-forming subunit of Nav1.7, a voltage-gated sodium (Nav) channel that directly mediates the depolarizing phase of action potentials in excitable membranes. Navs, also called VGSCs (voltage-gated sodium channels) or VDSCs (voltage-dependent sodium channels), operate by switching between closed and open conformations depending on the voltage difference across the membrane. In the open conformation they allow Na(+) ions to selectively pass through the pore, along their electrochemical gradient. The influx of Na(+) ions provokes membrane depolarization, initiating the propagation of electrical signals throughout cells and tissues. Nav1.7 plays a crucial role in controlling the excitability and action potential propagation from nociceptor neurons, thereby contributing to the sensory perception of pain. This Rattus norvegicus (Rat) protein is Sodium channel protein type 9 subunit alpha.